The following is a 359-amino-acid chain: Putative B3 domain-containing protein At3g24850 (359 aa).

Disordered regions lie at residues 92-111 and 159-192; these read DSEI…LQNS and EKME…KRTG. A compositionally biased stretch (polar residues) spans 100-111; the sequence is TSDSQMKTLQNS. The TF-B3 DNA-binding region spans 250–351; sequence FNNLLQNDFL…VLCFAMEQSS (102 aa).

It localises to the nucleus. This chain is Putative B3 domain-containing protein At3g24850, found in Arabidopsis thaliana (Mouse-ear cress).